Reading from the N-terminus, the 25-residue chain is Panurgine K (25 aa).

2 cysteine pairs are disulfide-bonded: C8/C23 and C11/C19.

It localises to the target cell membrane. The protein resides in the secreted. In terms of biological role, antimicrobial peptide active against Gram-positive bacteria M.luteus (MIC=1.6 uM) and B.subtilis (MIC=3.3 uM). Less active against Gram-negative bacteria E.coli (MIC=63.3 uM) and yeast C.albicans (MIC=24.2 uM). Not active against S.aureus and P.aeruginosa. Has no hemolytic activity against human erythrocytes. Probably acts by disrupting membranes of target cells. The protein is Panurgine K of Panurgus calcaratus (Solitary bee).